Reading from the N-terminus, the 267-residue chain is Myxobacterial hemagglutinin (267 aa).

Tandem repeats lie at residues 1 to 66 (MAAY…GTLS), 67 to 133 (SANN…SEVT), 134 to 200 (DGDT…GTLT), and 201 to 267 (SPDT…ARLG). Residues 1–267 (MAAYLVQNQW…GPIGFRARLG (267 aa)) form a 4 X 65 AA tandem repeats region.

The protein belongs to the bacterial lectin family.

This lectin might have a role in the differentiation of cells. This is Myxobacterial hemagglutinin (mbhA) from Myxococcus xanthus.